A 127-amino-acid polypeptide reads, in one-letter code: uncharacterized protein (127 aa).

Residues 71–126 (FYLREYRRIRRRIKELKNRAKYISKGEIAYNPKIMKEVEALKEKLSEIEKKIEELK) are a coiled coil.

This is an uncharacterized protein from Aquifex aeolicus (strain VF5).